The following is a 137-amino-acid chain: UPF0148 protein MJ0890 (137 aa).

This sequence belongs to the UPF0148 family.

The sequence is that of UPF0148 protein MJ0890 from Methanocaldococcus jannaschii (strain ATCC 43067 / DSM 2661 / JAL-1 / JCM 10045 / NBRC 100440) (Methanococcus jannaschii).